The chain runs to 140 residues: Transcription antitermination protein NusB (140 aa).

This sequence belongs to the NusB family.

Involved in transcription antitermination. Required for transcription of ribosomal RNA (rRNA) genes. Binds specifically to the boxA antiterminator sequence of the ribosomal RNA (rrn) operons. This chain is Transcription antitermination protein NusB, found in Myxococcus xanthus (strain DK1622).